A 203-amino-acid polypeptide reads, in one-letter code: Small ribosomal subunit protein uS3 (203 aa).

Residues 39–113 (IREIIRRNFL…NHVLNAKNIA (75 aa)) form the KH type-2 domain.

It belongs to the universal ribosomal protein uS3 family. Part of the 30S ribosomal subunit. Forms a tight complex with proteins S10 and S14.

Functionally, binds the lower part of the 30S subunit head. Binds mRNA in the 70S ribosome, positioning it for translation. This Carsonella ruddii protein is Small ribosomal subunit protein uS3.